The chain runs to 369 residues: Caffeine synthase 1 (369 aa).

Tyr24 is a binding site for S-adenosyl-L-homocysteine. Thr31 contacts caffeine. S-adenosyl-L-homocysteine is bound by residues Cys66, Asn71, Asp103, Leu104, Ser138, and Phe139. The caffeine site is built by Tyr156, His159, and Trp160. A Mg(2+)-binding site is contributed by Asn177. Arg225 is a caffeine binding site. Asp263, Phe265, and Asn266 together coordinate Mg(2+). Phe321 provides a ligand contact to caffeine.

The protein belongs to the methyltransferase superfamily. Type-7 methyltransferase family. Mg(2+) serves as cofactor.

The catalysed reaction is theobromine + S-adenosyl-L-methionine = caffeine + S-adenosyl-L-homocysteine + H(+). The enzyme catalyses 7-methylxanthine + S-adenosyl-L-methionine = theobromine + S-adenosyl-L-homocysteine + H(+). It functions in the pathway alkaloid biosynthesis. Its function is as follows. Involved in the biosynthesis of caffeine. Catalyzes the conversion of 7-methylxanthine (7mX) to theobromine and of theobromine to caffeine. The sequence is that of Caffeine synthase 1 from Camellia crassicolumna (Evergreen tea).